A 422-amino-acid polypeptide reads, in one-letter code: Gamma-glutamyl phosphate reductase (422 aa).

Belongs to the gamma-glutamyl phosphate reductase family.

The protein resides in the cytoplasm. The catalysed reaction is L-glutamate 5-semialdehyde + phosphate + NADP(+) = L-glutamyl 5-phosphate + NADPH + H(+). It participates in amino-acid biosynthesis; L-proline biosynthesis; L-glutamate 5-semialdehyde from L-glutamate: step 2/2. In terms of biological role, catalyzes the NADPH-dependent reduction of L-glutamate 5-phosphate into L-glutamate 5-semialdehyde and phosphate. The product spontaneously undergoes cyclization to form 1-pyrroline-5-carboxylate. The chain is Gamma-glutamyl phosphate reductase from Shewanella piezotolerans (strain WP3 / JCM 13877).